The following is a 222-amino-acid chain: GTP cyclohydrolase 1 (222 aa).

Residues Cys111, His114, and Cys182 each contribute to the Zn(2+) site.

The protein belongs to the GTP cyclohydrolase I family. As to quaternary structure, homomer.

It catalyses the reaction GTP + H2O = 7,8-dihydroneopterin 3'-triphosphate + formate + H(+). The protein operates within cofactor biosynthesis; 7,8-dihydroneopterin triphosphate biosynthesis; 7,8-dihydroneopterin triphosphate from GTP: step 1/1. In Salmonella gallinarum (strain 287/91 / NCTC 13346), this protein is GTP cyclohydrolase 1.